The primary structure comprises 125 residues: uncharacterized protein (125 aa).

The N-terminal 46 residues, 1 to 46, are a transit peptide targeting the chloroplast; sequence MFFDTKVLNYPTIHKSISMASTMQRTSSSAASNERQLSQLQRRAPS.

It is found in the plastid. Its subcellular location is the chloroplast. This is an uncharacterized protein from Arabidopsis thaliana (Mouse-ear cress).